The primary structure comprises 487 residues: MKETLIFDLSRKGRQGHRIASLDIEPQPAINLIPEKFLRTEPADLPEVPESEVVRHFIRLSNLNHHVDKDMYPLGSCTMKYNPKINDQTADIAGFTSIHPLQPAETAQGTLQLMYELGEMLREIAGMAAITLQPAAGAHGELTGILMIRKYHDSRASKRTKLLVVDSAHGTNPASAALVGYDILSVKSNAEGRTDIEDLKAKLDENVAALMLTNPNTIGLFEKDIKEIEQLVHDNGSLLYMDGANMNALMGITRPGDMGFDIVHYNLHKTFSAPHGGGGPGSGPVGVCDKLKPYLPVPVIEKHDDGNTSRYTLTTDRPLSIGRMMNFYGNFSVMVRAYTYIRMLGAEGIRRVSENAIINANYLLSKLIDRYDLPYPKPVMHEFCLSGDRQKKQHNVRTLDIAKRLLDLGFHAPTIYFPLIVSEALMIEPTETETRETLDRFAEAMLQIADETENSPETVQNAPQFTPVKRLDEAQASRKLNICCPGC.

Lysine 269 carries the post-translational modification N6-(pyridoxal phosphate)lysine.

It belongs to the GcvP family. C-terminal subunit subfamily. As to quaternary structure, the glycine cleavage system is composed of four proteins: P, T, L and H. In this organism, the P 'protein' is a heterodimer of two subunits. Pyridoxal 5'-phosphate is required as a cofactor.

It catalyses the reaction N(6)-[(R)-lipoyl]-L-lysyl-[glycine-cleavage complex H protein] + glycine + H(+) = N(6)-[(R)-S(8)-aminomethyldihydrolipoyl]-L-lysyl-[glycine-cleavage complex H protein] + CO2. The glycine cleavage system catalyzes the degradation of glycine. The P protein binds the alpha-amino group of glycine through its pyridoxal phosphate cofactor; CO(2) is released and the remaining methylamine moiety is then transferred to the lipoamide cofactor of the H protein. The protein is Probable glycine dehydrogenase (decarboxylating) subunit 2 of Prosthecochloris aestuarii (strain DSM 271 / SK 413).